The following is a 491-amino-acid chain: Peptidoglycan D,D-transpeptidase PbpA (491 aa).

The Cytoplasmic segment spans residues 1 to 7 (MNASLRR). Residues 8–28 (ISVTVMALIVLLLLNATMTQV) form a helical; Signal-anchor for type II membrane protein membrane-spanning segment. Residues 29 to 491 (FTADGLRADP…VIEAALQGEP (463 aa)) lie on the Periplasmic side of the membrane. The segment at 160–484 (GAVVALEPST…AAPIGRAVIE (325 aa)) is transpeptidase. Catalysis depends on Ser222, which acts as the Acyl-ester intermediate.

Belongs to the transpeptidase family.

The protein localises to the cell inner membrane. It carries out the reaction Preferential cleavage: (Ac)2-L-Lys-D-Ala-|-D-Ala. Also transpeptidation of peptidyl-alanyl moieties that are N-acyl substituents of D-alanine.. It participates in cell wall biogenesis; peptidoglycan biosynthesis. Its function is as follows. Transpeptidase that catalyzes cross-linking of the peptidoglycan cell wall. Required for the regulation of cell length. This Mycobacterium tuberculosis (strain CDC 1551 / Oshkosh) protein is Peptidoglycan D,D-transpeptidase PbpA (pbpA).